The following is a 449-amino-acid chain: XK-related protein 2 (449 aa).

10 consecutive transmembrane segments (helical) span residues 35–55 (FSIL…LYMV), 68–88 (TYTF…LIFV), 98–118 (LSLF…EAMI), 174–194 (IQAF…SLIS), 202–222 (VVLM…CNML), 241–261 (LCIT…LVLF), 269–289 (AVPF…IKFW), 306–326 (VGTL…NFSC), 357–377 (LVEN…VLLN), and 382–402 (LIAL…LLFF).

Belongs to the XK family. In terms of tissue distribution, expressed predominantly in the placenta, in syncytiotrophoblasts. Moderate levels in the adrenal gland, low levels in the trachea and very low levels in the bone marrow.

The protein resides in the cell membrane. This Homo sapiens (Human) protein is XK-related protein 2 (XKRX).